Reading from the N-terminus, the 545-residue chain is MDFKRLTAFFAIALVIMIGWEKMFPTPKPVPAPQQAAQKQAATASAEAALAPATPITVTTDTVQAVIDEKSGDLRRLTLLKYKATGDENKPFVLFGDGKEYTYVAQSELLDAQGNNILKGIGFSAPKKQYTLNGDTVEVRLSAPETNGLKIDKVYTFTKDSYLVNVRFDIANGSGQTANLSADYRIVRDHSEPEGQGYFTHSYVGPVVYTPEGNFQKVSFSDLDDDAKSGKSEAEYIRKTPTGWLGMIEHHFMSTWILQPKGGQSVCAAGDCRIDIKRRSDKLYSASVSVPLAAIQAGAKAETAVNLYAGPQTTSVIANIADNLQLAKDYGKVHWFASPLFWLLNQLHNIIGNWGWAIVVLTIIVKAVLYPLTNASYRSMAKMRAAAPKLQTIKEKYGDDRMAQQQAMMQLYKDEKINPLGGCLPMLLQIPVFIGLYWALFASVELRQAPWLGWITDLSRADPYYILPIIMAATMFAQTYLNPPPTDPMQAKMMKIMPLVFSVMFFFFPAGLVLYWVVNNLLTIAQQWHINRSIEKQRAQGEVVS.

4 helical membrane passes run 350 to 370, 424 to 444, 461 to 481, and 498 to 518; these read IIGN…AVLY, LPML…FASV, ADPY…QTYL, and PLVF…YWVV.

This sequence belongs to the OXA1/ALB3/YidC family. Type 1 subfamily. Interacts with the Sec translocase complex via SecD. Specifically interacts with transmembrane segments of nascent integral membrane proteins during membrane integration.

The protein resides in the cell inner membrane. In terms of biological role, required for the insertion and/or proper folding and/or complex formation of integral membrane proteins into the membrane. Involved in integration of membrane proteins that insert both dependently and independently of the Sec translocase complex, as well as at least some lipoproteins. Aids folding of multispanning membrane proteins. The chain is Membrane protein insertase YidC from Neisseria gonorrhoeae (strain ATCC 700825 / FA 1090).